Reading from the N-terminus, the 723-residue chain is DNA-binding protein RFX2 (723 aa).

The interval 1-46 (MQNSEGGADSPASVALRPSAAAPPVPASPQRVLVQAASSNPKGAQM) is disordered. A compositionally biased stretch (low complexity) spans 10–20 (SPASVALRPSA). Residue serine 28 is modified to Phosphoserine. The segment at residues 199-274 (HLQWLLDNYE…YHYYGIRLKP (76 aa)) is a DNA-binding region (RFX-type winged-helix). A disordered region spans residues 292 to 332 (QQPMHQKPRYRPAQKTDSLGDSGSHSGLHSTPEQTMAVQSQ). The span at 308-321 (DSLGDSGSHSGLHS) shows a compositional bias: low complexity. Polar residues predominate over residues 322–332 (TPEQTMAVQSQ). A Phosphoserine modification is found at serine 416. The disordered stretch occupies residues 688–723 (MGDEQRGSEAGPDARSLGEPLVKRERSDPNHSLQGI).

It belongs to the RFX family. As to quaternary structure, homodimer; probably only forms homodimers in testis. Heterodimer; heterodimerizes with RFX1 and RFX3.

Its subcellular location is the nucleus. The protein resides in the cytoplasm. Transcription factor that acts as a key regulator of spermatogenesis. Acts by regulating expression of genes required for the haploid phase during spermiogenesis, such as genes required for cilium assembly and function. Recognizes and binds the X-box, a regulatory motif with DNA sequence 5'-GTNRCC(0-3N)RGYAAC-3' present on promoters. Probably activates transcription of the testis-specific histone gene H1-6. In Homo sapiens (Human), this protein is DNA-binding protein RFX2 (RFX2).